We begin with the raw amino-acid sequence, 103 residues long: Small ribosomal subunit protein bS6c (103 aa).

The protein belongs to the bacterial ribosomal protein bS6 family.

It localises to the plastid. The protein localises to the chloroplast. Binds together with bS18 to 16S ribosomal RNA. In Thalassiosira pseudonana (Marine diatom), this protein is Small ribosomal subunit protein bS6c.